The primary structure comprises 123 residues: Probable U6 snRNA-associated Sm-like protein LSm4 (123 aa).

A Sm domain is found at 3-76 (LPLSLLKTAQ…IKYLRIPETV (74 aa)). Residues 85–97 (NEVRRQQQREQSR) show a composition bias toward basic and acidic residues. Positions 85-123 (NEVRRQQQREQSRGRGGGRGGRGGHRGGGGNRGGRGGAR) are disordered. The segment covering 98-123 (GRGGGRGGRGGHRGGGGNRGGRGGAR) has biased composition (gly residues).

It belongs to the snRNP Sm proteins family. In terms of assembly, component of the precatalytic spliceosome (spliceosome B complex). Component of the U4/U6-U5 tri-snRNP complex, a building block of the precatalytic spliceosome (spliceosome B complex). LSM2, LSM3, LSM4, LSM5, LSM6, LSM7 and LSM8 form a heptameric, ring-shaped subcomplex (the LSM2-8 complex) that is part of the U4/U6-U5 tri-snRNP complex and the precatalytic spliceosome.

The protein localises to the nucleus. Its function is as follows. Plays a role in pre-mRNA splicing as component of the U4/U6-U5 tri-snRNP complex that is involved in spliceosome assembly, and as component of the precatalytic spliceosome (spliceosome B complex). The heptameric LSM2-8 complex binds specifically to the 3'-terminal U-tract of U6 snRNA. This is Probable U6 snRNA-associated Sm-like protein LSm4 (lsm-4) from Caenorhabditis elegans.